The primary structure comprises 420 residues: Cytoplasmic tRNA 2-thiolation protein 1 (420 aa).

S200 carries the phosphoserine modification.

It belongs to the TtcA family. CTU1/NCS6/ATPBD3 subfamily. In terms of assembly, component of a complex at least composed of URM1, CTU2/NCS2 and CTU1/ATPBD3. May form a heterodimer with CTU2/NCS2.

It localises to the cytoplasm. It participates in tRNA modification; 5-methoxycarbonylmethyl-2-thiouridine-tRNA biosynthesis. Plays a central role in 2-thiolation of mcm(5)S(2)U at tRNA wobble positions of tRNA(Lys), tRNA(Glu) and tRNA(Gln). Directly binds tRNAs and probably acts by catalyzing adenylation of tRNAs, an intermediate required for 2-thiolation. It is unclear whether it acts as a sulfurtransferase that transfers sulfur from thiocarboxylated URM1 onto the uridine of tRNAs at wobble position. This Mus musculus (Mouse) protein is Cytoplasmic tRNA 2-thiolation protein 1 (Ctu1).